A 498-amino-acid polypeptide reads, in one-letter code: COP9 signalosome complex subunit 1 (498 aa).

Positions 249–430 (SYLEAANSFI…HVLVSTQGDK (182 aa)) constitute a PCI domain.

This sequence belongs to the CSN1 family. As to quaternary structure, component of the COP9 signalosome (CSN) complex.

It localises to the cytoplasm. The protein resides in the nucleus. Its function is as follows. Component of the COP9 signalosome (CSN) complex that acts as an regulator of the ubiquitin (Ubl) conjugation pathway by mediating the deneddylation of the cullin subunit of SCF-type E3 ubiquitin-protein ligase complexes. The CSN complex seems to link protein degradation to sexual development. Required for fruit body formation. In Emericella nidulans (strain FGSC A4 / ATCC 38163 / CBS 112.46 / NRRL 194 / M139) (Aspergillus nidulans), this protein is COP9 signalosome complex subunit 1 (csnA).